The sequence spans 144 residues: UPF0735 ACT domain-containing protein LSEI_1046 (144 aa).

In terms of domain architecture, ACT spans 68 to 143; the sequence is VISLMLHHDR…GVSDVHLVSV (76 aa).

It belongs to the UPF0735 family.

In Lacticaseibacillus paracasei (strain ATCC 334 / BCRC 17002 / CCUG 31169 / CIP 107868 / KCTC 3260 / NRRL B-441) (Lactobacillus paracasei), this protein is UPF0735 ACT domain-containing protein LSEI_1046.